The sequence spans 483 residues: Phosphomethylpyrimidine synthase (483 aa).

Substrate is bound by residues asparagine 97, methionine 126, tyrosine 156, histidine 192, 212–214 (SRG), 253–256 (DSLR), and glutamate 292. Histidine 296 serves as a coordination point for Zn(2+). Tyrosine 319 is a substrate binding site. Histidine 360 contacts Zn(2+). Residues cysteine 440, cysteine 443, and cysteine 448 each coordinate [4Fe-4S] cluster.

This sequence belongs to the ThiC family. It depends on [4Fe-4S] cluster as a cofactor.

It catalyses the reaction 5-amino-1-(5-phospho-beta-D-ribosyl)imidazole + S-adenosyl-L-methionine = 4-amino-2-methyl-5-(phosphooxymethyl)pyrimidine + CO + 5'-deoxyadenosine + formate + L-methionine + 3 H(+). The protein operates within cofactor biosynthesis; thiamine diphosphate biosynthesis. Its function is as follows. Catalyzes the synthesis of the hydroxymethylpyrimidine phosphate (HMP-P) moiety of thiamine from aminoimidazole ribotide (AIR) in a radical S-adenosyl-L-methionine (SAM)-dependent reaction. This Parasynechococcus marenigrum (strain WH8102) protein is Phosphomethylpyrimidine synthase.